Reading from the N-terminus, the 157-residue chain is MPSVESFELDHNAVKAPYVRHCGVHKVGSDGEVNKFDIRFCQPNKQAMKPDTIHTLEHLLAFNIRTHSEKYDHFDIIDISPMGCQTGYYLVVSGAPTPEEIVELLDATFKDAVEVTEIPAANEEQCGQAKLHDLEGAKRLMRFWLSQDQEELLKVFG.

Fe cation-binding residues include His54, His58, and Cys126.

Belongs to the LuxS family. Homodimer. The cofactor is Fe cation.

It catalyses the reaction S-(5-deoxy-D-ribos-5-yl)-L-homocysteine = (S)-4,5-dihydroxypentane-2,3-dione + L-homocysteine. Involved in the synthesis of autoinducer 2 (AI-2) which is secreted by bacteria and is used to communicate both the cell density and the metabolic potential of the environment. The regulation of gene expression in response to changes in cell density is called quorum sensing. Catalyzes the transformation of S-ribosylhomocysteine (RHC) to homocysteine (HC) and 4,5-dihydroxy-2,3-pentadione (DPD). The chain is S-ribosylhomocysteine lyase from Bacillus pumilus (strain SAFR-032).